We begin with the raw amino-acid sequence, 398 residues long: Probable sugar efflux transporter (398 aa).

Transmembrane regions (helical) follow at residues valine 15–leucine 35, valine 50–leucine 70, leucine 81–phenylalanine 101, valine 103–alanine 123, alanine 136–isoleucine 156, threonine 169–proline 189, proline 209–tyrosine 229, phenylalanine 246–glycine 266, leucine 275–alanine 295, leucine 301–valine 321, valine 333–glycine 353, and alanine 364–phenylalanine 384.

It belongs to the major facilitator superfamily. SotB (TC 2.A.1.2) family.

The protein resides in the cell inner membrane. Its function is as follows. Involved in the efflux of sugars. The physiological role may be the reduction of the intracellular concentration of toxic sugars or sugar metabolites. The sequence is that of Probable sugar efflux transporter from Enterobacter sp. (strain 638).